The primary structure comprises 1218 residues: Sodium bicarbonate cotransporter 3 (1218 aa).

Disordered stretches follow at residues 1 to 31 (MEAD…KTSS) and 53 to 99 (HVPF…SQRV). Residues 1-612 (MEADGAGEQM…DFKDALSLQC (612 aa)) are Extracellular-facing. Ser57, Ser60, Ser89, and Ser155 each carry phosphoserine. A compositionally biased stretch (basic residues) spans 60 to 77 (SRRRHRHRGHKHHHRRRK). Residues 78 to 90 (DKDSDKEDGRESP) show a composition bias toward basic and acidic residues. Asn176 is a glycosylation site (N-linked (GlcNAc...) asparagine). Phosphoserine occurs at positions 238, 247, and 263. A glycan (N-linked (GlcNAc...) asparagine) is linked at Asn274. 3 disordered regions span residues 294–350 (SRAG…DIPR), 364–412 (KGQE…ENST), and 536–577 (SIRI…HAGP). Residues 308–318 (VPTPQNSPPSS) are compositionally biased toward pro residues. The span at 319–337 (PSLSRLTSRSSQQTQPQAP) shows a compositional bias: low complexity. Over residues 383-396 (SPQSAPGNLDSSKS) the composition is skewed to polar residues. 3 positions are modified to phosphoserine: Ser386, Ser404, and Ser407. Asn410 is a glycosylation site (N-linked (GlcNAc...) asparagine). A phosphoserine mark is found at Ser411 and Ser560. Positions 567–576 (PPKEADHHAG) are enriched in basic and acidic residues. A helical transmembrane segment spans residues 613–633 (LASILFLYCACMSPVITFGGL). At 634-641 (LGEATEGR) the chain is on the cytoplasmic side. Residues 642-662 (ISAIESLFGASLTGIAYSLFA) traverse the membrane as a helical segment. The Extracellular segment spans residues 663 to 699 (GQPLTILGSTGPVLVFEKILFKFCRDYHLSYLSLRTS). Residues 700–720 (IGLWTSFLCIVLVATDASSLV) traverse the membrane as a helical segment. The Cytoplasmic portion of the chain corresponds to 721-729 (CYITRFTEE). The chain crosses the membrane as a helical span at residues 730–750 (AFAALICIIFIYEALEKLFHL). Residues 751 to 821 (GEIYAFNMHN…MFVGSACGPH (71 aa)) lie on the Extracellular side of the membrane. A disulfide bond links Cys770 and Cys772. N-linked (GlcNAc...) asparagine glycosylation is found at Asn780, Asn790, and Asn800. Cys806 and Cys818 are joined by a disulfide. Residues 822–842 (GPYVPDVLFWCVVLFFTTFFL) traverse the membrane as a helical segment. The Cytoplasmic segment spans residues 843-865 (SSFLKQFKTKRYFPTKVRSTISD). A helical transmembrane segment spans residues 866–886 (FAVFLTIVIMVAIDYLVGIPS). Residues 887–912 (PKLHVPEKFEPTDPSRGWIISPLGDN) are Extracellular-facing. A helical transmembrane segment spans residues 913 to 933 (PWWTLLIAAVPALLCTILIFM). The Cytoplasmic segment spans residues 934–958 (DQQITAVIINRKEHKLKKGAGYHLD). The helical transmembrane segment at 959–979 (LLMVAVMLGVCSIMGLPWFVA) threads the bilayer. Over 980–1015 (ATVLSISHVNSLKVESECSAPGEQPKFLGIREQRVT) the chain is Extracellular. Residues 1012-1135 (QRVTGLMIFI…MDLCFTKREL (124 aa)) form an essential for cell membrane localization and transport activity region. The helical transmembrane segment at 1016 to 1036 (GLMIFILMGLSVFMTSVLKFI) threads the bilayer. At 1037–1038 (PM) the chain is on the cytoplasmic side. Residues 1039 to 1059 (PVLYGVFLYMGVSSLKGIQFF) traverse the membrane as a helical segment. The Extracellular segment spans residues 1060-1096 (DRIKLFGMPAKHQPDLIYLRYVPLWKVHVFTVVQLTC). Residues Met1067 and Leu1078 each carry the phosphoserine modification. A helical transmembrane segment spans residues 1097 to 1117 (LVLLWVIKASAAAVVFPMMVL). The tract at residues 1118-1140 (ALVFVRKLMDLCFTKRELSWLDD) is essential for interaction with RACK1. Topologically, residues 1118–1218 (ALVFVRKLMD…KKYMDAETSL (101 aa)) are cytoplasmic. Residues 1138 to 1140 (LDD) are CA2-binding. Positions 1148 to 1165 (KKEDDKKKKEKEEAERML) are enriched in basic and acidic residues. The tract at residues 1148-1172 (KKEDDKKKKEKEEAERMLQGDGDTV) is disordered. Thr1171 carries the phosphothreonine modification. A phosphoserine mark is found at Ser1180, Thr1188, Ile1201, and Ser1217. A PDZ-binding motif is present at residues 1215–1218 (ETSL).

Belongs to the anion exchanger (TC 2.A.31) family. Interacts with USH1C. Forms a complex with ATP6V1B1 and NHERF1/EBP50. Interacts in a pH dependent-manner with CA2/carbonic anhydrase 2. Interacts with CFTR probably through NHERF1/EBP50. As to quaternary structure, interacts with RACK1. Post-translationally, undergoes lysosome-mediated degradation. In terms of processing, N-glycosylated. As to expression, expressed in aorta, ventricles, atrium, mesenteric artery, kidney, spleen, duodenum, jejunum, ileum, colon, lung, trachea, gastric fundus and pylorus, cerebrum, cerebellum, pancreas, liver, parotid gland, and epididymis. Expressed in the inner ear by cochlear outer and inner hair cells (at protein level). Highly expressed in testis and spleen. Specifically expressed in kidney. In terms of tissue distribution, specifically expressed in hippocampal neurons.

The protein localises to the basolateral cell membrane. The protein resides in the apical cell membrane. Its subcellular location is the cell projection. It localises to the stereocilium. It is found in the cell membrane. It catalyses the reaction hydrogencarbonate(in) + Na(+)(in) = hydrogencarbonate(out) + Na(+)(out). Its activity is regulated as follows. Insensitive to stilbene derivatives. Electroneutral sodium- and bicarbonate-dependent cotransporter with a Na(+):HCO3(-) 1:1 stoichiometry. Mediates the sodium-dependent bicarbonate transport important for pH recovery after acid load as well as for regulation of steady-state pH in the duodenum and vascular smooth muscle cells. Plays a key role in macrophage acidification, mediating bicarbonate import into the cytoplasm which is crucial for net acid extrusion and maintenance of cytoplasmic pH during phagocytosis. Provides cellular bicarbonate for de novo purine and pyrimidine synthesis and is a key mediator of de novo nucleotide synthesis downstream of mTORC1 signaling in proliferating cells. This is Sodium bicarbonate cotransporter 3 (Slc4a7) from Rattus norvegicus (Rat).